A 226-amino-acid chain; its full sequence is Probable thiol methyltransferase 2 (226 aa).

S-adenosyl-L-methionine is bound by residues Trp-29, Trp-33, Trp-40, and Gly-67. Ser-79 is modified (phosphoserine). S-adenosyl-L-methionine is bound by residues Asp-88, 116–117, and Tyr-132; that span reads DF.

The protein belongs to the class I-like SAM-binding methyltransferase superfamily. TPMT family.

It carries out the reaction a thiol + S-adenosyl-L-methionine = a methyl thioether + S-adenosyl-L-homocysteine + H(+). Functionally, S-adenosyl-L-methionine-dependent methyltransferase. The polypeptide is Probable thiol methyltransferase 2 (HOL3) (Arabidopsis thaliana (Mouse-ear cress)).